Here is a 980-residue protein sequence, read N- to C-terminus: MRRAEAPSSAHPAGPIPDAGKGEGEEDEEKDGTRLGLSTTPRNCIPRRGISVLEKLVKTCPVWLQLGLGQAEAAKILQQEMAGMFLVCRDNNLKQLVLCVHFPSLKGSSAEVLEYPIKEEKAILYLEGSVLVFEDIFRLIAFYCVSRDLLPFTLRLPQAILEASSFLELETISNLGLGFWDSSLNSRGSAEPLRSPAPGTPASSSLRPTTHYANCSCEIELSVGNDRLWFVNPIFIEDCILPADPPPLPTGSYPPRPTPATPDATSPTSKGSPRRPPPPPPLPTVPPTGPARPLAPPVPPAGPLPNSPLTPTSHLAPHAPGPPGHSNQPPMTACESLPRPAVGLGPFGEEEMKPGTTPNPLHQAPPPPLPLKKALPAAPPRRRISERVSLESQNVGTSTDRDHSGISRTASLNLPPQSTVSSLGDRPPRTTEQSQDTEAKASHADSIPVPPGKAKQPPVPPPRKKRVSRQLASTLLSPLESPIQEASSEKQATGASWEGLSPVRQAGMQHLQVQSSSCPQSSPEFKGSQASLSDSLGVPASAADQDSYSTSSAEEELEFSSPNVKKKPSMILDKARHRLSFVSFASVFHAFLSSDRKLYKKVVELAQDKSSYFGSLVQDYKVYSLEMMARQTSSTEMLQEIRTMMTQLKSYLLQSTELKALVEPTLHSEEELEAIVESALYKCVLKPLKEAINSSLLEIHSRDGSLQQLKENQLVVLATTTTDLGVTTSVPEVAVMEKILQKLTSMHKAYSPGKKISILLKTCKLIYDSMALGNPGKPYGADDFLPVLMYVLARSNLTEMLLNVEYMMELMDPALQLGEGSYYLTTTYGALEHIKNYDKITVTRQLSVEVQDSIHRWERRRTLNKARASRSSVQDFICVSYLKPEQQSRTLASRADTAAQALCAQCAEKFEVSQPQDYRLFVLVDGRCFQLADEALPHRIKGYLLRSEPKRDFHFVYRPQDSGKDASSQPCIVVREPNFL.

The tract at residues 1 to 40 (MRRAEAPSSAHPAGPIPDAGKGEGEEDEEKDGTRLGLSTT) is disordered. In terms of domain architecture, SH2 spans 63-158 (WLQLGLGQAE…LLPFTLRLPQ (96 aa)). Over residues 247 to 260 (PLPTGSYPPRPTPA) the composition is skewed to pro residues. Disordered regions lie at residues 247-496 (PLPT…TGAS) and 509-560 (QHLQ…LEFS). Over residues 261 to 271 (TPDATSPTSKG) the composition is skewed to low complexity. Positions 274 to 308 (RRPPPPPPLPTVPPTGPARPLAPPVPPAGPLPNSP) are enriched in pro residues. Composition is skewed to polar residues over residues 406-422 (ISRT…TVSS) and 484-494 (QEASSEKQATG). Low complexity predominate over residues 514–523 (QSSSCPQSSP). Positions 584–729 (FASVFHAFLS…TTTDLGVTTS (146 aa)) are interaction with RAB5B. The VPS9 domain maps to 700–843 (HSRDGSLQQL…IKNYDKITVT (144 aa)). The Ras-associating domain occupies 865 to 962 (KARASRSSVQ…FHFVYRPQDS (98 aa)).

Belongs to the RIN (Ras interaction/interference) family. Interacts with CD2AP, RAB5B, RAB31 and BIN1.

It is found in the cytoplasm. It localises to the cytoplasmic vesicle. The protein resides in the early endosome. Functionally, ras effector protein that functions as a guanine nucleotide exchange (GEF) for RAB5B and RAB31, by exchanging bound GDP for free GTP. Required for normal RAB31 function. This Mus musculus (Mouse) protein is Ras and Rab interactor 3 (Rin3).